A 566-amino-acid chain; its full sequence is Oxygen-dependent choline dehydrogenase (566 aa).

Residue 7–36 (DYIICGAGSAGNVLATRLTEDPDVTVLLLE) coordinates FAD. The tract at residues 180 to 202 (NGYQQEGFGPMDRTVTPKGRRAS) is disordered. H474 functions as the Proton acceptor in the catalytic mechanism.

It belongs to the GMC oxidoreductase family. FAD serves as cofactor.

The enzyme catalyses choline + A = betaine aldehyde + AH2. It carries out the reaction betaine aldehyde + NAD(+) + H2O = glycine betaine + NADH + 2 H(+). The protein operates within amine and polyamine biosynthesis; betaine biosynthesis via choline pathway; betaine aldehyde from choline (cytochrome c reductase route): step 1/1. Its function is as follows. Involved in the biosynthesis of the osmoprotectant glycine betaine. Catalyzes the oxidation of choline to betaine aldehyde and betaine aldehyde to glycine betaine at the same rate. The protein is Oxygen-dependent choline dehydrogenase of Burkholderia lata (strain ATCC 17760 / DSM 23089 / LMG 22485 / NCIMB 9086 / R18194 / 383).